The chain runs to 237 residues: Uridylate kinase (237 aa).

An ATP-binding site is contributed by K12–G15. The tract at residues G20–G25 is involved in allosteric activation by GTP. G54 is a UMP binding site. Residues G55 and R59 each contribute to the ATP site. Residues D74 and T135–T142 contribute to the UMP site. Residues T162, Y168, and D171 each coordinate ATP.

It belongs to the UMP kinase family. In terms of assembly, homohexamer.

It localises to the cytoplasm. The catalysed reaction is UMP + ATP = UDP + ADP. It participates in pyrimidine metabolism; CTP biosynthesis via de novo pathway; UDP from UMP (UMPK route): step 1/1. With respect to regulation, allosterically activated by GTP. Inhibited by UTP. Catalyzes the reversible phosphorylation of UMP to UDP. In Haemophilus influenzae (strain PittGG), this protein is Uridylate kinase.